The primary structure comprises 211 residues: Large ribosomal subunit protein uL4 (211 aa).

Residues 41–53 (QAHSRQGTASTLT) are compositionally biased toward polar residues. The disordered stretch occupies residues 41 to 85 (QAHSRQGTASTLTRAEVRGGGRKPYKQKGTGRARQGSIRTPLRPG). The span at 60-71 (GGRKPYKQKGTG) shows a compositional bias: basic residues.

The protein belongs to the universal ribosomal protein uL4 family. As to quaternary structure, part of the 50S ribosomal subunit.

Functionally, one of the primary rRNA binding proteins, this protein initially binds near the 5'-end of the 23S rRNA. It is important during the early stages of 50S assembly. It makes multiple contacts with different domains of the 23S rRNA in the assembled 50S subunit and ribosome. Its function is as follows. Forms part of the polypeptide exit tunnel. This Prochlorococcus marinus (strain SARG / CCMP1375 / SS120) protein is Large ribosomal subunit protein uL4.